The chain runs to 193 residues: 7-methyl-GTP pyrophosphatase (193 aa).

The Proton acceptor role is filled by Asp68.

Belongs to the Maf family. YceF subfamily. A divalent metal cation is required as a cofactor.

Its subcellular location is the cytoplasm. It carries out the reaction N(7)-methyl-GTP + H2O = N(7)-methyl-GMP + diphosphate + H(+). Functionally, nucleoside triphosphate pyrophosphatase that hydrolyzes 7-methyl-GTP (m(7)GTP). May have a dual role in cell division arrest and in preventing the incorporation of modified nucleotides into cellular nucleic acids. This chain is 7-methyl-GTP pyrophosphatase, found in Chromobacterium violaceum (strain ATCC 12472 / DSM 30191 / JCM 1249 / CCUG 213 / NBRC 12614 / NCIMB 9131 / NCTC 9757 / MK).